Here is a 327-residue protein sequence, read N- to C-terminus: Aspartate carbamoyltransferase catalytic subunit (327 aa).

2 residues coordinate carbamoyl phosphate: Arg73 and Thr74. Lys101 contacts L-aspartate. Residues Arg123, His153, and Gln156 each contribute to the carbamoyl phosphate site. 2 residues coordinate L-aspartate: Arg186 and Arg241. Carbamoyl phosphate-binding residues include Gly282 and Pro283.

This sequence belongs to the aspartate/ornithine carbamoyltransferase superfamily. ATCase family. In terms of assembly, heterododecamer (2C3:3R2) of six catalytic PyrB chains organized as two trimers (C3), and six regulatory PyrI chains organized as three dimers (R2).

The enzyme catalyses carbamoyl phosphate + L-aspartate = N-carbamoyl-L-aspartate + phosphate + H(+). It participates in pyrimidine metabolism; UMP biosynthesis via de novo pathway; (S)-dihydroorotate from bicarbonate: step 2/3. Catalyzes the condensation of carbamoyl phosphate and aspartate to form carbamoyl aspartate and inorganic phosphate, the committed step in the de novo pyrimidine nucleotide biosynthesis pathway. The protein is Aspartate carbamoyltransferase catalytic subunit of Acidithiobacillus ferrooxidans (strain ATCC 23270 / DSM 14882 / CIP 104768 / NCIMB 8455) (Ferrobacillus ferrooxidans (strain ATCC 23270)).